The following is a 233-amino-acid chain: 5'-methylthioadenosine/S-adenosylhomocysteine nucleosidase (233 aa).

E12 serves as the catalytic Proton acceptor. Residues G78, I152, and 173–174 contribute to the substrate site; that span reads ME. D197 acts as the Proton donor in catalysis.

It belongs to the PNP/UDP phosphorylase family. MtnN subfamily. Homodimer.

It carries out the reaction S-adenosyl-L-homocysteine + H2O = S-(5-deoxy-D-ribos-5-yl)-L-homocysteine + adenine. It catalyses the reaction S-methyl-5'-thioadenosine + H2O = 5-(methylsulfanyl)-D-ribose + adenine. The catalysed reaction is 5'-deoxyadenosine + H2O = 5-deoxy-D-ribose + adenine. Its pathway is amino-acid biosynthesis; L-methionine biosynthesis via salvage pathway; S-methyl-5-thio-alpha-D-ribose 1-phosphate from S-methyl-5'-thioadenosine (hydrolase route): step 1/2. Its function is as follows. Catalyzes the irreversible cleavage of the glycosidic bond in both 5'-methylthioadenosine (MTA) and S-adenosylhomocysteine (SAH/AdoHcy) to adenine and the corresponding thioribose, 5'-methylthioribose and S-ribosylhomocysteine, respectively. Also cleaves 5'-deoxyadenosine, a toxic by-product of radical S-adenosylmethionine (SAM) enzymes, into 5-deoxyribose and adenine. Thus, is required for in vivo function of the radical SAM enzymes biotin synthase and lipoic acid synthase, that are inhibited by 5'-deoxyadenosine accumulation. This Yersinia pseudotuberculosis serotype O:1b (strain IP 31758) protein is 5'-methylthioadenosine/S-adenosylhomocysteine nucleosidase.